A 121-amino-acid polypeptide reads, in one-letter code: Large ribosomal subunit protein uL18 (121 aa).

The protein belongs to the universal ribosomal protein uL18 family. Part of the 50S ribosomal subunit; part of the 5S rRNA/L5/L18/L25 subcomplex. Contacts the 5S and 23S rRNAs.

Functionally, this is one of the proteins that bind and probably mediate the attachment of the 5S RNA into the large ribosomal subunit, where it forms part of the central protuberance. This Buchnera aphidicola subsp. Baizongia pistaciae (strain Bp) protein is Large ribosomal subunit protein uL18.